A 438-amino-acid chain; its full sequence is tRNA-2-methylthio-N(6)-dimethylallyladenosine synthase (438 aa).

The MTTase N-terminal domain occupies 2–118 (KSFYLETFGC…LADMVRDAEL (117 aa)). The [4Fe-4S] cluster site is built by cysteine 11, cysteine 47, cysteine 81, cysteine 157, cysteine 161, and cysteine 164. The Radical SAM core domain occupies 143–373 (PSAEVSRFVT…LALQEEITRQ (231 aa)). The TRAM domain maps to 376–438 (QMDIGQVLPV…YRNSHLGERV (63 aa)).

The protein belongs to the methylthiotransferase family. MiaB subfamily. In terms of assembly, monomer. It depends on [4Fe-4S] cluster as a cofactor.

The protein resides in the cytoplasm. It carries out the reaction N(6)-dimethylallyladenosine(37) in tRNA + (sulfur carrier)-SH + AH2 + 2 S-adenosyl-L-methionine = 2-methylsulfanyl-N(6)-dimethylallyladenosine(37) in tRNA + (sulfur carrier)-H + 5'-deoxyadenosine + L-methionine + A + S-adenosyl-L-homocysteine + 2 H(+). Functionally, catalyzes the methylthiolation of N6-(dimethylallyl)adenosine (i(6)A), leading to the formation of 2-methylthio-N6-(dimethylallyl)adenosine (ms(2)i(6)A) at position 37 in tRNAs that read codons beginning with uridine. The chain is tRNA-2-methylthio-N(6)-dimethylallyladenosine synthase from Syntrophotalea carbinolica (strain DSM 2380 / NBRC 103641 / GraBd1) (Pelobacter carbinolicus).